The following is a 225-amino-acid chain: UPF0173 metal-dependent hydrolase Pars_0810 (225 aa).

This sequence belongs to the UPF0173 family.

This Pyrobaculum arsenaticum (strain DSM 13514 / JCM 11321 / PZ6) protein is UPF0173 metal-dependent hydrolase Pars_0810.